The chain runs to 175 residues: Ribosome maturation factor RimM (175 aa).

A PRC barrel domain is found at 95–175 (SEDEFYWREL…RIEVDWDPGF (81 aa)).

It belongs to the RimM family. In terms of assembly, binds ribosomal protein uS19.

The protein localises to the cytoplasm. In terms of biological role, an accessory protein needed during the final step in the assembly of 30S ribosomal subunit, possibly for assembly of the head region. Essential for efficient processing of 16S rRNA. May be needed both before and after RbfA during the maturation of 16S rRNA. It has affinity for free ribosomal 30S subunits but not for 70S ribosomes. The polypeptide is Ribosome maturation factor RimM (Aliivibrio fischeri (strain MJ11) (Vibrio fischeri)).